Here is a 292-residue protein sequence, read N- to C-terminus: Probable starch degradation products transport system permease protein AmyD (292 aa).

Transmembrane regions (helical) follow at residues 15-35 (WLFIAPTLLSLIIVVLIPFII), 77-97 (FAVACIVIINVVGLSLAMLVT), 110-130 (FYLPNLIGGLILGFIWNFIFV), 156-176 (FWGLVIVTSWQMIGYVMVIYI), 205-225 (VFPLIAPAFTVSLFITLSNSF), and 260-280 (MAVGQAKAVIMFLIIAVISVI). Residues 71 to 281 (IIFTAKFAVA…LIIAVISVIQ (211 aa)) form the ABC transmembrane type-1 domain.

This sequence belongs to the binding-protein-dependent transport system permease family. MalFG subfamily.

It localises to the cell membrane. Its function is as follows. Probably part of a binding-protein-dependent transport system starch degradation products. Probably responsible for the translocation of the substrate across the membrane. In Thermoanaerobacterium thermosulfurigenes (Clostridium thermosulfurogenes), this protein is Probable starch degradation products transport system permease protein AmyD (amyD).